The sequence spans 171 residues: Large ribosomal subunit protein uL10 (171 aa).

Belongs to the universal ribosomal protein uL10 family. Part of the ribosomal stalk of the 50S ribosomal subunit. The N-terminus interacts with L11 and the large rRNA to form the base of the stalk. The C-terminus forms an elongated spine to which L12 dimers bind in a sequential fashion forming a multimeric L10(L12)X complex.

Functionally, forms part of the ribosomal stalk, playing a central role in the interaction of the ribosome with GTP-bound translation factors. The sequence is that of Large ribosomal subunit protein uL10 from Corynebacterium diphtheriae (strain ATCC 700971 / NCTC 13129 / Biotype gravis).